The following is a 484-amino-acid chain: Cholesterol 22-hydroxylase CYP90B27 (484 aa).

The chain crosses the membrane as a helical span at residues 2–22 (ALELILVLSSLIVILIIFFSF). Residue Cys429 participates in heme binding.

The protein belongs to the cytochrome P450 family. In terms of tissue distribution, expressed in roots.

Its subcellular location is the membrane. The catalysed reaction is cholesterol + reduced [NADPH--hemoprotein reductase] + O2 = (22R)-hydroxycholesterol + oxidized [NADPH--hemoprotein reductase] + H2O + H(+). The protein operates within steroid metabolism; cholesterol metabolism. Involved in the biosynthesis of steroidal saponins and alkaloids natural products from cholesterol such as spirostane-type saponins and polyphyllins, compounds with pharmacological activity. Catalyzes the C-22 hydroxylation of cholesterol to form 22R-hydroxycholesterol. The chain is Cholesterol 22-hydroxylase CYP90B27 from Paris polyphylla (Daiswa polyphylla).